Consider the following 84-residue polypeptide: MKRFLLFISILMMIGTIVVGKEGYAMDHEGCKFSCFIRPSGFCDGYCKTHLKASSGYCAWPACYCYGVPSNIKVWDYATNKCGK.

Residues 1–20 (MKRFLLFISILMMIGTIVVG) form the signal peptide. In terms of domain architecture, LCN-type CS-alpha/beta spans 21–83 (KEGYAMDHEG…VWDYATNKCG (63 aa)). Disulfide bonds link C31–C82, C35–C58, C43–C63, and C47–C65. The residue at position 82 (C82) is a Cysteine amide.

This sequence belongs to the long (4 C-C) scorpion toxin superfamily. Sodium channel inhibitor family. Beta subfamily. Post-translationally, contains 4 disulfide bonds. Expressed by the venom gland.

Its subcellular location is the secreted. Its function is as follows. Beta toxins bind voltage-independently at site-4 of sodium channels (Nav) and shift the voltage of activation toward more negative potentials thereby affecting sodium channel activation and promoting spontaneous and repetitive firing. This toxin is active against hNav1.3/SCN3A. The polypeptide is Toxin Tf2 (Tityus fasciolatus (Central Brazilian scorpion)).